A 65-amino-acid chain; its full sequence is Large ribosomal subunit protein bL35 (65 aa).

This sequence belongs to the bacterial ribosomal protein bL35 family.

The protein is Large ribosomal subunit protein bL35 of Alkalilimnicola ehrlichii (strain ATCC BAA-1101 / DSM 17681 / MLHE-1).